We begin with the raw amino-acid sequence, 32 residues long: U5-ctenitoxin-Pn1a (32 aa).

Intrachain disulfides connect Cys-3/Cys-16, Cys-9/Cys-21, and Cys-15/Cys-30.

In terms of tissue distribution, expressed by the venom gland.

The protein localises to the secreted. Blocks voltage-gated sodium channels (Nav). Causes tail erection, scratching and a reduction in mobility at a dose level of 1.40 mg/mouse. The chain is U5-ctenitoxin-Pn1a from Phoneutria nigriventer (Brazilian armed spider).